Here is a 209-residue protein sequence, read N- to C-terminus: MRKKPIIIGVTGGSGGGKTSVSRAILSNFPDQKITMIEHDSYYKDQSHLTFEERVKTNYDHPLAFDTNLMIEQLNELIEGRPVDIPVYDYTKHTRSDRTIRQEPQDVIIVEGILVLEDQRLRDLMDIKLFVDTDDDIRIIRRIKRDMEERDRSLDSIIEQYTEVVKPMYHQFIEPTKRYADIVIPEGVSNIVAIDLINTKVASILNEAK.

12-19 (GGSGGGKT) contributes to the ATP binding site.

Belongs to the uridine kinase family.

It is found in the cytoplasm. The catalysed reaction is uridine + ATP = UMP + ADP + H(+). It carries out the reaction cytidine + ATP = CMP + ADP + H(+). It participates in pyrimidine metabolism; CTP biosynthesis via salvage pathway; CTP from cytidine: step 1/3. Its pathway is pyrimidine metabolism; UMP biosynthesis via salvage pathway; UMP from uridine: step 1/1. The sequence is that of Uridine kinase from Streptococcus agalactiae serotype V (strain ATCC BAA-611 / 2603 V/R).